The chain runs to 653 residues: Cell wall adhesin EAP1 (653 aa).

The N-terminal stretch at 1–18 (MKVSQILPLAGAISVASG) is a signal peptide. The segment at 19 to 146 (FWIPDFSNKQ…EYTTYCPLTS (128 aa)) is N-terminal cell-cell adhesion domain. Positions 144–267 (LTSTPATEST…TETASSTPVE (124 aa)) are disordered. A compositionally biased stretch (low complexity) spans 145 to 267 (TSTPATESTP…TETASSTPVE (123 aa)). 15 repeat units span residues 147–152 (TPATES), 153–158 (TPATES), 159–164 (TPATES), 165–170 (TPATES), 171–176 (TPATES), 177–182 (TPATES), 192–197 (TPATES), 198–203 (TPATES), 204–209 (TPATES), 210–215 (TPATES), 216–221 (TPATES), 222–227 (TPATES), 228–233 (TPATES), 234–248 (TPAT…STET), and 249–254 (TPATES). The tract at residues 147–254 (TPATESTPAT…STETTPATES (108 aa)) is 15 X 6 AA tandem repeats, Ser/Thr-rich. N323 carries an N-linked (GlcNAc...) asparagine glycan. Disordered regions lie at residues 324-540 (TSTP…TTQP) and 572-595 (EGGC…GPEV). Tandem repeats lie at residues 326 to 345 (TPAA…GTET), 346 to 365 (TPAA…GTET), 366 to 389 (TPAA…GTET), 390 to 413 (TPAA…GTET), 414 to 433 (TPAA…GTET), 434 to 457 (TPAA…GTET), 458 to 477 (TPAA…GTET), 478 to 501 (TPAA…GTET), 502 to 521 (TPAA…GTET), and 522 to 541 (TPAA…TQPV). Residues 326 to 541 (TPAAPGTPVE…EATPVTTQPV (216 aa)) form a 10 X 20 AA approximate tandem repeats region. Low complexity-rich tracts occupy residues 341–353 (PGTE…PGTP) and 361–538 (PGTE…PVTT). Over residues 579–590 (GQQTETSPSVPT) the composition is skewed to polar residues. A lipid anchor (GPI-anchor amidated glycine) is attached at G632. A propeptide spans 633–653 (SGSALKKPYYGLAVAALVYFM) (removed in mature form).

The protein belongs to the PGA18 family. In terms of processing, the GPI-anchor is attached to the protein in the endoplasmic reticulum and serves to target the protein to the cell surface. There, the glucosamine-inositol phospholipid moiety is cleaved off and the GPI-modified mannoprotein is covalently attached via its lipidless GPI glycan remnant to the 1,6-beta-glucan of the outer cell wall layer.

It is found in the secreted. The protein resides in the cell wall. It localises to the membrane. Functionally, cell wall protein which mediates cell-cell and cell-substrate adhesion. Required for biofilm formation and plays a role in virulence. The sequence is that of Cell wall adhesin EAP1 (EAP1) from Candida albicans (strain SC5314 / ATCC MYA-2876) (Yeast).